Consider the following 338-residue polypeptide: MKVFYDKDADLSLIKGKNVTIIGYGSQGHAHALNLNDSGVKVTVGLRKNGASWNKAVNAGLQVKEVAEAVKEADVVMILLPDEQIADVYKNEVHGNIKQGAALAFAHGFNVHYGAVIPRADLDVIMIAPKAPGHTVRGTYTQGGGVPHLIAVHQDKSGAARDIALSYATANGGGRAGIIETNFREETETDLFGEQAVLCGGTVELIKAGFETLVEAGYAPEMAYFECLHELKLIVDLIYEGGIANMNYSISNNAEYGEYVTGPRVVTEETKKAMKQCLKDIQTGEYAKSFLLEYKAGQPTLISRRRLTEEHQIEQVGAKLRAMMPWIAKNKLVDQTKN.

Positions Met1 to Thr181 constitute a KARI N-terminal Rossmann domain. Residues Tyr24–Gln27, Arg47, and Ser52 contribute to the NADP(+) site. Residue His107 is part of the active site. Gly133 is a binding site for NADP(+). Residues Asn182–Ile327 form the KARI C-terminal knotted domain. 4 residues coordinate Mg(2+): Asp190, Glu194, Glu226, and Glu230. A substrate-binding site is contributed by Ser251.

Belongs to the ketol-acid reductoisomerase family. Requires Mg(2+) as cofactor.

The enzyme catalyses (2R)-2,3-dihydroxy-3-methylbutanoate + NADP(+) = (2S)-2-acetolactate + NADPH + H(+). The catalysed reaction is (2R,3R)-2,3-dihydroxy-3-methylpentanoate + NADP(+) = (S)-2-ethyl-2-hydroxy-3-oxobutanoate + NADPH + H(+). Its pathway is amino-acid biosynthesis; L-isoleucine biosynthesis; L-isoleucine from 2-oxobutanoate: step 2/4. It functions in the pathway amino-acid biosynthesis; L-valine biosynthesis; L-valine from pyruvate: step 2/4. In terms of biological role, involved in the biosynthesis of branched-chain amino acids (BCAA). Catalyzes an alkyl-migration followed by a ketol-acid reduction of (S)-2-acetolactate (S2AL) to yield (R)-2,3-dihydroxy-isovalerate. In the isomerase reaction, S2AL is rearranged via a Mg-dependent methyl migration to produce 3-hydroxy-3-methyl-2-ketobutyrate (HMKB). In the reductase reaction, this 2-ketoacid undergoes a metal-dependent reduction by NADPH to yield (R)-2,3-dihydroxy-isovalerate. The protein is Ketol-acid reductoisomerase (NADP(+)) of Ralstonia pickettii (strain 12J).